Consider the following 191-residue polypeptide: Thymidylate kinase (191 aa).

Gly7–Ser14 is a binding site for ATP.

The protein belongs to the thymidylate kinase family.

The catalysed reaction is dTMP + ATP = dTDP + ADP. Phosphorylation of dTMP to form dTDP in both de novo and salvage pathways of dTTP synthesis. This Helicobacter pylori (strain HPAG1) protein is Thymidylate kinase.